The primary structure comprises 360 residues: MKTATAVINRRALRHNLQRIRQLAPGSQIVAVVKANAYGHGMIESAHTFCDADCYGVARLSEALALRAAGITKPIVLLEGFFSADDLPLLVEHQLETAVHSLEQLAALEQATLPQPIRVWMKLDTGMHRLGVLPEHADAFWQRLTECRNVVQPVNIMSHFCRADEPEAGTTERQLACFDAFTQGKPGAQSIAASGGILLWPQAHRDRVRPGIILYGVSPLDNEDAAHFGFQPAMTFTSHLIAVREHKAGETVGYGGTWTSPRDTRLGVVAVGYGDGYPRCAPAGTPVLINGREVPLSGRVSMDMITVDLGPDAQDKVGDEVILWGPTLSVERIAAHTGASAYELITRLTQRTALEYVDGE.

Residue Lys-34 is the Proton acceptor; specific for D-alanine of the active site. The residue at position 34 (Lys-34) is an N6-(pyridoxal phosphate)lysine. Arg-129 is a substrate binding site. The Proton acceptor; specific for L-alanine role is filled by Tyr-254. Position 302 (Met-302) interacts with substrate.

It belongs to the alanine racemase family. Requires pyridoxal 5'-phosphate as cofactor.

The enzyme catalyses L-alanine = D-alanine. The protein operates within amino-acid biosynthesis; D-alanine biosynthesis; D-alanine from L-alanine: step 1/1. Catalyzes the interconversion of L-alanine and D-alanine. May also act on other amino acids. The protein is Alanine racemase (alr) of Pectobacterium atrosepticum (strain SCRI 1043 / ATCC BAA-672) (Erwinia carotovora subsp. atroseptica).